Consider the following 416-residue polypeptide: Nuclear hormone receptor family member nhr-59 (416 aa).

The nuclear receptor DNA-binding region spans Gln-17–Phe-94. 2 NR C4-type zinc fingers span residues Cys-20–Cys-40 and Cys-57–Cys-82. The region spanning Thr-162–Val-415 is the NR LBD domain.

The protein belongs to the nuclear hormone receptor family.

Its subcellular location is the nucleus. Orphan nuclear receptor. This is Nuclear hormone receptor family member nhr-59 from Caenorhabditis elegans.